A 473-amino-acid polypeptide reads, in one-letter code: Photosystem II CP43 reaction center protein (473 aa).

Positions 1-14 (MKTLYSLRRFYHVE) are excised as a propeptide. Position 15 is an N-acetylthreonine (Thr-15). Residue Thr-15 is modified to Phosphothreonine. The next 5 helical transmembrane spans lie at 69-93 (LFEVAHFVPEKPMYEQGLILLPHLA), 134-155 (LLGPETLEESFPFFGYVWKDRN), 178-200 (KALYFGGVYDTWAPGGGDVRKIT), 255-275 (KPFAWARRAFVWSGEAYLSYS), and 291-312 (WFNNTAYPSEFYGPTGPEASQA). Glu-367 is a binding site for [CaMn4O5] cluster. A helical membrane pass occupies residues 447–471 (RARAAAAGFEKGIDRDFEPVLSMTP).

It belongs to the PsbB/PsbC family. PsbC subfamily. PSII is composed of 1 copy each of membrane proteins PsbA, PsbB, PsbC, PsbD, PsbE, PsbF, PsbH, PsbI, PsbJ, PsbK, PsbL, PsbM, PsbT, PsbX, PsbY, PsbZ, Psb30/Ycf12, at least 3 peripheral proteins of the oxygen-evolving complex and a large number of cofactors. It forms dimeric complexes. Binds multiple chlorophylls and provides some of the ligands for the Ca-4Mn-5O cluster of the oxygen-evolving complex. It may also provide a ligand for a Cl- that is required for oxygen evolution. PSII binds additional chlorophylls, carotenoids and specific lipids. is required as a cofactor.

The protein resides in the plastid. Its subcellular location is the chloroplast thylakoid membrane. In terms of biological role, one of the components of the core complex of photosystem II (PSII). It binds chlorophyll and helps catalyze the primary light-induced photochemical processes of PSII. PSII is a light-driven water:plastoquinone oxidoreductase, using light energy to abstract electrons from H(2)O, generating O(2) and a proton gradient subsequently used for ATP formation. This is Photosystem II CP43 reaction center protein from Ipomoea purpurea (Common morning glory).